A 212-amino-acid chain; its full sequence is MESTEKLTDTNAILAYLYETFPLCFIAEGETKPLKIGLFQDLAERLADDSKVSKTQLRIALRRYTSSWRYLKCVKAGTHRIDLDGNSCGELEQEHVDHAQATLKESQEKAKAKRIAKAGKTSAPAANAKKPVKKPVARRPKAAPSAKPVKEKVAEVVLTPAVLTELKKNQRVNVKLGKAPVAGVILDIKKEDVQVQLDSGLTIKVKAEYILL.

Positions 114-149 (RIAKAGKTSAPAANAKKPVKKPVARRPKAAPSAKPV) are disordered. A compositionally biased stretch (low complexity) spans 118 to 129 (AGKTSAPAANAK). The span at 130–141 (KPVKKPVARRPK) shows a compositional bias: basic residues.

The protein belongs to the ProQ family.

It localises to the cytoplasm. Its function is as follows. RNA chaperone with significant RNA binding, RNA strand exchange and RNA duplexing activities. The protein is RNA chaperone ProQ of Shewanella piezotolerans (strain WP3 / JCM 13877).